We begin with the raw amino-acid sequence, 302 residues long: MPEAMTASPEKTPASDYERRQKLELNKLQKRLRREVGQAIADFSMIEAGDKVMCCLSGGKDSYAMLDILLNLQKSAPVRFELIAVNLDQKQPGFPEHVLPDYLESMGIEYHIIEKDTYSIVKEKVPEGKTTCGLCSRLRRGILYNFAEEHGVTKIALGHHRDDLLETLFLNMFYGGKLKSMPPVLHSDDGRNTVIRPLAYAREKDIARYASLREFPIIPCNLCGSQENLQRQVIKEMFQTWDKQHPGRLETMFRALCNVEPSHLADPELYDFREGRRLGGKRQAVQTAEPQQDFGRLDVLNL.

The PP-loop motif signature appears at 57–62 (SGGKDS). Residues cysteine 132, cysteine 135, and cysteine 223 each contribute to the [4Fe-4S] cluster site.

The protein belongs to the TtcA family. As to quaternary structure, homodimer. Requires Mg(2+) as cofactor. It depends on [4Fe-4S] cluster as a cofactor.

It localises to the cytoplasm. The catalysed reaction is cytidine(32) in tRNA + S-sulfanyl-L-cysteinyl-[cysteine desulfurase] + AH2 + ATP = 2-thiocytidine(32) in tRNA + L-cysteinyl-[cysteine desulfurase] + A + AMP + diphosphate + H(+). It functions in the pathway tRNA modification. In terms of biological role, catalyzes the ATP-dependent 2-thiolation of cytidine in position 32 of tRNA, to form 2-thiocytidine (s(2)C32). The sulfur atoms are provided by the cysteine/cysteine desulfurase (IscS) system. The chain is tRNA-cytidine(32) 2-sulfurtransferase from Marinobacter nauticus (strain ATCC 700491 / DSM 11845 / VT8) (Marinobacter aquaeolei).